We begin with the raw amino-acid sequence, 152 residues long: Ribosome maturation factor RimP (152 aa).

It belongs to the RimP family.

The protein localises to the cytoplasm. Its function is as follows. Required for maturation of 30S ribosomal subunits. This chain is Ribosome maturation factor RimP, found in Desulfatibacillum aliphaticivorans.